The primary structure comprises 638 residues: 1-deoxy-D-xylulose-5-phosphate synthase (638 aa).

Thiamine diphosphate contacts are provided by residues His-79 and 120-122 (AHS). Asp-151 lines the Mg(2+) pocket. Thiamine diphosphate is bound by residues 152–153 (GA), Asn-180, Tyr-289, and Glu-371. Asn-180 is a Mg(2+) binding site.

The protein belongs to the transketolase family. DXPS subfamily. As to quaternary structure, homodimer. The cofactor is Mg(2+). Requires thiamine diphosphate as cofactor.

It carries out the reaction D-glyceraldehyde 3-phosphate + pyruvate + H(+) = 1-deoxy-D-xylulose 5-phosphate + CO2. It participates in metabolic intermediate biosynthesis; 1-deoxy-D-xylulose 5-phosphate biosynthesis; 1-deoxy-D-xylulose 5-phosphate from D-glyceraldehyde 3-phosphate and pyruvate: step 1/1. Catalyzes the acyloin condensation reaction between C atoms 2 and 3 of pyruvate and glyceraldehyde 3-phosphate to yield 1-deoxy-D-xylulose-5-phosphate (DXP). This is 1-deoxy-D-xylulose-5-phosphate synthase from Rhizobium etli (strain CIAT 652).